Here is a 178-residue protein sequence, read N- to C-terminus: Cytochrome b6-f complex iron-sulfur subunit (178 aa).

Residues 20-42 (LLTFGSVTGVALGALYPVANYFI) traverse the membrane as a helical segment. Positions 65 to 161 (ASGWLSSHPE…VSVENDNVFV (97 aa)) constitute a Rieske domain. 4 residues coordinate [2Fe-2S] cluster: Cys-107, His-109, Cys-125, and His-128. Cys-112 and Cys-127 are oxidised to a cystine.

It belongs to the Rieske iron-sulfur protein family. In terms of assembly, the 4 large subunits of the cytochrome b6-f complex are cytochrome b6, subunit IV (17 kDa polypeptide, PetD), cytochrome f and the Rieske protein, while the 4 small subunits are PetG, PetL, PetM and PetN. The complex functions as a dimer. Requires [2Fe-2S] cluster as cofactor.

The protein resides in the cellular thylakoid membrane. The catalysed reaction is 2 oxidized [plastocyanin] + a plastoquinol + 2 H(+)(in) = 2 reduced [plastocyanin] + a plastoquinone + 4 H(+)(out). Component of the cytochrome b6-f complex, which mediates electron transfer between photosystem II (PSII) and photosystem I (PSI), cyclic electron flow around PSI, and state transitions. This is Cytochrome b6-f complex iron-sulfur subunit from Synechococcus sp. (strain CC9605).